The sequence spans 338 residues: Cytoskeleton protein RodZ (338 aa).

The Cytoplasmic portion of the chain corresponds to 1–111; sequence MNTEASQDQT…LGKKHKKRDG (111 aa). The HTH cro/C1-type domain occupies 19–79; that stretch reads LRQAREALGL…KLVHLPEDEL (61 aa). A DNA-binding region (H-T-H motif) is located at residues 30–49; that stretch reads QQMVAERLCLKVSTIRDIEE. A helical; Signal-anchor for type II membrane protein membrane pass occupies residues 112 to 132; it reads WLMSFTWLIVLVVLGLTGAWW. Residues 133–338 lie on the Periplasmic side of the membrane; that stretch reads WQNHQAQQAE…RVARLTVGVE (206 aa). Polar residues-rich tracts occupy residues 151 to 163 and 180 to 195; these read SAQL…QSVP and PVAN…NGTV. The interval 151–253 is disordered; the sequence is SAQLSQNGGQ…LPTADAGVTG (103 aa). Low complexity predominate over residues 196 to 209; it reads PATSSAAPADTANN. The segment covering 210–241 has biased composition (polar residues); the sequence is GVNTTAPQGTTSAESAVVSPSQAPLPSVSTAQ.

Belongs to the RodZ family.

The protein resides in the cell inner membrane. Functionally, cytoskeletal protein that is involved in cell-shape control through regulation of the length of the long axis. The protein is Cytoskeleton protein RodZ of Yersinia enterocolitica serotype O:8 / biotype 1B (strain NCTC 13174 / 8081).